We begin with the raw amino-acid sequence, 1350 residues long: Protein transport protein SEC16A homolog (1350 aa).

5 disordered regions span residues 26 to 45 (YTPT…GSDS), 73 to 97 (LGND…SIAP), 964 to 1063 (MPPP…TRKV), 1118 to 1216 (AEEA…KPPI), and 1235 to 1350 (QVME…EVEL). A compositionally biased stretch (basic and acidic residues) spans 35 to 45 (KELKFDDGSDS). Phosphoserine is present on serine 43. The span at 970–1002 (HSTTGNPQVNEYQHQQQEAAKLSYSQSANTMSS) shows a compositional bias: polar residues. Positions 1150-1168 (SPSSGSWSSGSPTPSENSP) are enriched in low complexity. Composition is skewed to polar residues over residues 1195 to 1210 (TYNQ…PPVQ) and 1289 to 1316 (RSGS…GSVN). Low complexity predominate over residues 1317 to 1343 (SSSFMSPTSASTFRPSPLNSSSSSLGE).

This sequence belongs to the SEC16 family. Interacts with SEC13A, SEC13B and SEC31A.

It is found in the golgi apparatus. It localises to the golgi stack. The protein resides in the endoplasmic reticulum. In terms of biological role, required for efficient protein export from the endoplasmic reticulum (ER) to the Golgi by regulating COPII coat dynamics at the ER. Functions as a scaffold and regulator of COPII coat assembly at ER exit sites. This Arabidopsis thaliana (Mouse-ear cress) protein is Protein transport protein SEC16A homolog.